Reading from the N-terminus, the 461-residue chain is Probable lipid II flippase MurJ (461 aa).

A run of 12 helical transmembrane segments spans residues 5–25 (ILGAGVYSDIFFVAFKLPNLF), 51–71 (FASLVGLIFCIVLFMWCLLVA), 96–116 (IVAINFWYLLLVFITTFLGAL), 123–143 (FFASAYSASLLNVCMILALLI), 156–176 (LSYGVLLGGVAQILLHFYPLV), 229–249 (IASFLDTTIASFLASGSVSYL), 258–278 (LPLALFAIAISTALFPSIAIA), 293–313 (KAWFFLVGVLLLCSIGGIMLS), 337–357 (VFSLYLLGLLPFGLTKLFSLW), 372–392 (LISLFLGLAASLSLMPLLGVL), 402–422 (GLFLFVLTIKAFGFQLFLGII), and 429–449 (LVILFLACVEILLLLAFKSWV).

The protein belongs to the MurJ/MviN family.

Its subcellular location is the cell inner membrane. Its pathway is cell wall biogenesis; peptidoglycan biosynthesis. Its function is as follows. Involved in peptidoglycan biosynthesis. Transports lipid-linked peptidoglycan precursors from the inner to the outer leaflet of the cytoplasmic membrane. The sequence is that of Probable lipid II flippase MurJ from Helicobacter pylori (strain ATCC 700392 / 26695) (Campylobacter pylori).